The chain runs to 207 residues: Large ribosomal subunit protein uL4 (207 aa).

The protein belongs to the universal ribosomal protein uL4 family. In terms of assembly, part of the 50S ribosomal subunit.

In terms of biological role, one of the primary rRNA binding proteins, this protein initially binds near the 5'-end of the 23S rRNA. It is important during the early stages of 50S assembly. It makes multiple contacts with different domains of the 23S rRNA in the assembled 50S subunit and ribosome. Functionally, forms part of the polypeptide exit tunnel. In Erythrobacter litoralis (strain HTCC2594), this protein is Large ribosomal subunit protein uL4.